A 239-amino-acid polypeptide reads, in one-letter code: Ribonuclease 3 (239 aa).

One can recognise an RNase III domain in the interval 11 to 133 (HTAIQKKLGY…MFAAVSFDAD (123 aa)). Glu46 contacts Mg(2+). Asp50 is a catalytic residue. Asp119 and Glu122 together coordinate Mg(2+). The active site involves Glu122. Positions 160–230 (DGKTALQEAL…AKEALKWLEE (71 aa)) constitute a DRBM domain.

The protein belongs to the ribonuclease III family. Homodimer. Requires Mg(2+) as cofactor.

Its subcellular location is the cytoplasm. The catalysed reaction is Endonucleolytic cleavage to 5'-phosphomonoester.. Functionally, digests double-stranded RNA. Involved in the processing of primary rRNA transcript to yield the immediate precursors to the large and small rRNAs (23S and 16S). Processes some mRNAs, and tRNAs when they are encoded in the rRNA operon. Processes pre-crRNA and tracrRNA of type II CRISPR loci if present in the organism. The chain is Ribonuclease 3 from Neisseria gonorrhoeae (strain ATCC 700825 / FA 1090).